The sequence spans 124 residues: MRLITHNMLSCNIKGVTSGFPLRIEAGNVIEKEVDFNPDFIRHMFAKIEWKALVEGARSMGYAELPEESPDAAVLKSDEPFLKKLHHALLELHLEEGALVCPETGRKFPVNKGIPNMLLHEDEV.

One can recognise a TRM112 domain in the interval 2–120 (RLITHNMLSC…NKGIPNMLLH (119 aa)).

It belongs to the TRM112 family. In terms of assembly, interacts with TRM9.

Its function is as follows. Acts as an activator of both rRNA/tRNA and protein methyltransferases. Required for TRM9 tRNA methyltransferase activity. Involved in the regulation of cell division progression during organ growth. Required for the expression of cell cycle-related genes, and the G2-M phase progression during organogenesis. The sequence is that of Multifunctional methyltransferase subunit TRM112 homolog A from Arabidopsis thaliana (Mouse-ear cress).